Consider the following 205-residue polypeptide: Ribosomal RNA small subunit methyltransferase G (205 aa).

S-adenosyl-L-methionine-binding positions include glycine 66, phenylalanine 71, 119 to 120 (IE), and arginine 135.

This sequence belongs to the methyltransferase superfamily. RNA methyltransferase RsmG family.

The protein resides in the cytoplasm. It carries out the reaction guanosine(527) in 16S rRNA + S-adenosyl-L-methionine = N(7)-methylguanosine(527) in 16S rRNA + S-adenosyl-L-homocysteine. Functionally, specifically methylates the N7 position of guanine in position 527 of 16S rRNA. The sequence is that of Ribosomal RNA small subunit methyltransferase G from Rhizobium leguminosarum bv. trifolii (strain WSM2304).